Here is a 338-residue protein sequence, read N- to C-terminus: Secretion system apparatus protein SsaL (338 aa).

This is Secretion system apparatus protein SsaL (ssaL) from Salmonella typhimurium (strain LT2 / SGSC1412 / ATCC 700720).